The chain runs to 860 residues: uncharacterized protein (860 aa).

Composition is skewed to basic and acidic residues over residues 334-345 (LEKKSLQSDSKN) and 536-551 (EDQK…LSDK). Disordered regions lie at residues 334–360 (LEKK…LRKE), 530–551 (EEDD…LSDK), 708–798 (ARKT…EDEF), and 813–842 (PFNE…RKAI). 3 stretches are compositionally biased toward acidic residues: residues 716–725 (DEEGEIDEDE), 738–750 (EMDE…DSEE), and 813–824 (PFNETDDEEEIQ). Phosphoserine is present on residues S744 and S748.

This sequence belongs to the CBF/MAK21 family.

This is an uncharacterized protein from Schizosaccharomyces pombe (strain 972 / ATCC 24843) (Fission yeast).